We begin with the raw amino-acid sequence, 264 residues long: Na(+)-translocating NADH-quinone reductase subunit E (264 aa).

Helical transmembrane passes span 11 to 31 (VFGIFLQATFIQNILLSNFLG), 50 to 70 (MSVALVLTVTGSINWVVHTFI), 90 to 110 (FLELIIFIVVIAAFTQILELL), 123 to 143 (GIFLPLIAVNCAILGGVLFGI), 149 to 169 (FIPMMIFSLGAGCGWWLAIVL), and 189 to 209 (MGISFITTGLIAMAFMSLTGI).

Belongs to the NqrDE/RnfAE family. Composed of six subunits; NqrA, NqrB, NqrC, NqrD, NqrE and NqrF.

The protein localises to the cell inner membrane. The enzyme catalyses a ubiquinone + n Na(+)(in) + NADH + H(+) = a ubiquinol + n Na(+)(out) + NAD(+). Its function is as follows. NQR complex catalyzes the reduction of ubiquinone-1 to ubiquinol by two successive reactions, coupled with the transport of Na(+) ions from the cytoplasm to the periplasm. NqrA to NqrE are probably involved in the second step, the conversion of ubisemiquinone to ubiquinol. The polypeptide is Na(+)-translocating NADH-quinone reductase subunit E (Chlamydia caviae (strain ATCC VR-813 / DSM 19441 / 03DC25 / GPIC) (Chlamydophila caviae)).